Here is a 262-residue protein sequence, read N- to C-terminus: Eukaryotic translation initiation factor 3 subunit G (262 aa).

Residues Asn-182 to Pro-260 enclose the RRM domain.

Belongs to the eIF-3 subunit G family. In terms of assembly, component of the eukaryotic translation initiation factor 3 (eIF-3) complex.

The protein localises to the cytoplasm. Its function is as follows. RNA-binding component of the eukaryotic translation initiation factor 3 (eIF-3) complex, which is involved in protein synthesis of a specialized repertoire of mRNAs and, together with other initiation factors, stimulates binding of mRNA and methionyl-tRNAi to the 40S ribosome. The eIF-3 complex specifically targets and initiates translation of a subset of mRNAs involved in cell proliferation. This subunit can bind 18S rRNA. Binds to GC-rich 5'UTRs in cholinergic motor neurons, thereby may play a role in translational regulation of mRNAs involved in neuropeptide signaling and stress response, including hlh-30 isoform d and ncs-2. The sequence is that of Eukaryotic translation initiation factor 3 subunit G from Caenorhabditis elegans.